A 481-amino-acid polypeptide reads, in one-letter code: UDP-N-acetylmuramoyl-L-alanyl-D-glutamate--L-lysine ligase (481 aa).

UDP-N-acetyl-alpha-D-muramoyl-L-alanyl-D-glutamate is bound at residue S42. Residue 118 to 124 (GTKGKTT) participates in ATP binding. UDP-N-acetyl-alpha-D-muramoyl-L-alanyl-D-glutamate-binding positions include Q158, 160–161 (TT), S187, and R195. At K229 the chain carries N6-carboxylysine. The L-lysine recognition motif signature appears at 404-407 (DDPN).

The protein belongs to the MurCDEF family. MurE subfamily. In terms of processing, carboxylation is probably crucial for Mg(2+) binding and, consequently, for the gamma-phosphate positioning of ATP.

The protein localises to the cytoplasm. It catalyses the reaction UDP-N-acetyl-alpha-D-muramoyl-L-alanyl-D-glutamate + L-lysine + ATP = UDP-N-acetyl-alpha-D-muramoyl-L-alanyl-gamma-D-glutamyl-L-lysine + ADP + phosphate + H(+). It participates in cell wall biogenesis; peptidoglycan biosynthesis. In terms of biological role, catalyzes the addition of L-lysine to the nucleotide precursor UDP-N-acetylmuramoyl-L-alanyl-D-glutamate (UMAG) in the biosynthesis of bacterial cell-wall peptidoglycan. The sequence is that of UDP-N-acetylmuramoyl-L-alanyl-D-glutamate--L-lysine ligase from Streptococcus pyogenes serotype M28 (strain MGAS6180).